A 128-amino-acid polypeptide reads, in one-letter code: Aspartate 1-decarboxylase (128 aa).

Serine 25 functions as the Schiff-base intermediate with substrate; via pyruvic acid in the catalytic mechanism. Serine 25 carries the pyruvic acid (Ser) modification. Threonine 57 serves as a coordination point for substrate. The Proton donor role is filled by tyrosine 58. Position 73 to 75 (73 to 75) interacts with substrate; it reads GSA.

The protein belongs to the PanD family. Heterooctamer of four alpha and four beta subunits. The cofactor is pyruvate. Post-translationally, is synthesized initially as an inactive proenzyme, which is activated by self-cleavage at a specific serine bond to produce a beta-subunit with a hydroxyl group at its C-terminus and an alpha-subunit with a pyruvoyl group at its N-terminus.

Its subcellular location is the cytoplasm. The enzyme catalyses L-aspartate + H(+) = beta-alanine + CO2. The protein operates within cofactor biosynthesis; (R)-pantothenate biosynthesis; beta-alanine from L-aspartate: step 1/1. Catalyzes the pyruvoyl-dependent decarboxylation of aspartate to produce beta-alanine. The polypeptide is Aspartate 1-decarboxylase (Burkholderia lata (strain ATCC 17760 / DSM 23089 / LMG 22485 / NCIMB 9086 / R18194 / 383)).